The sequence spans 349 residues: Protein disulfide isomerase Creld2 (349 aa).

An N-terminal signal peptide occupies residues 1 to 22; the sequence is MHLLLAAGFGLLLLLLPPPAAS. The short motif at 28–31 is the CXXC element; it reads CQRC. Cystine bridges form between C28-C31, C137-C151, C145-C163, and C165-C174. The EGF-like 1 domain occupies 133–175; sequence DCKECQGGSERPCSGNGYCSGDGSRQGDGSCQCHAGYKGPLCI. Residue N187 is glycosylated (N-linked (GlcNAc...) asparagine). An FU 1 repeat occupies 190 to 237; it reads HSICLACDESCKTCSGPSNKDCVQCEVGWARVEDACVDVDECAAETPP. N-linked (GlcNAc...) asparagine glycosylation occurs at N248. An FU 2 repeat occupies 250-297; the sequence is SYICEECDSTCVGCTGKGPANCKECIAGYTKQSGQCADIDECSLEEKA. Residues 260-263 carry the CXXC motif; sequence CVGC. 4 cysteine pairs are disulfide-bonded: C260/C263, C291/C305, C298/C314, and C316/C327. The region spanning 287–328 is the EGF-like 2; calcium-binding domain; the sequence is DIDECSLEEKACKRRNENCYNVPGSFVCVCPDGFEETEDACV.

The protein belongs to the CRELD family. Interacts with Chrna4. Component of a complex containing at least Creld2, Manf, Matn3 and Pdia4. Broadly expressed in brain (at protein level).

The protein localises to the endoplasmic reticulum. It catalyses the reaction Catalyzes the rearrangement of -S-S- bonds in proteins.. Protein disulfide isomerase. Might play a role in the unfolded protein response. May regulate transport of alpha4-beta2 neuronal acetylcholine receptor. This Rattus norvegicus (Rat) protein is Protein disulfide isomerase Creld2 (Creld2).